Here is a 157-residue protein sequence, read N- to C-terminus: Transcriptional repressor NrdR (157 aa).

The segment covering 1-11 (MQCPSCQNTDS) has biased composition (polar residues). The segment at 1–21 (MQCPSCQNTDSRVLESRSADT) is disordered. A zinc finger lies at 3–34 (CPSCQNTDSRVLESRSADTGKSVRRRRECLNC). The ATP-cone domain maps to 49–139 (ITVIKRSESK…VYRQFNGIND (91 aa)).

The protein belongs to the NrdR family. The cofactor is Zn(2+).

Negatively regulates transcription of bacterial ribonucleotide reductase nrd genes and operons by binding to NrdR-boxes. The polypeptide is Transcriptional repressor NrdR (Prochlorococcus marinus (strain MIT 9211)).